The chain runs to 182 residues: Antigenic integral membrane glycoprotein (182 aa).

Positions M1–T35 are cleaved as a signal peptide. 2 N-linked (GlcNAc...) asparagine glycosylation sites follow: N88 and N120. The chain crosses the membrane as a helical span at residues E162–Y180. C168 carries S-palmitoyl cysteine lipidation.

The protein localises to the cell membrane. Major antigen in the surface tegument. The sequence is that of Antigenic integral membrane glycoprotein from Schistosoma mansoni (Blood fluke).